A 228-amino-acid chain; its full sequence is HTH-type transcriptional repressor RspR (228 aa).

The 68-residue stretch at 11–78 folds into the HTH gntR-type domain; sequence QPVNQQIYRI…PQRGSYVNKI (68 aa). The segment at residues 38 to 57 is a DNA-binding region (H-T-H motif); that stretch reads EKEVSVRFNVSRQPVREAFI.

Repressor of the rspAB operon. Acts by binding directly to the upstream region of rspA. The sequence is that of HTH-type transcriptional repressor RspR (rspR) from Escherichia coli (strain K12).